Consider the following 82-residue polypeptide: Cytochrome b559 subunit alpha (82 aa).

A helical membrane pass occupies residues 22–36 (VIHAITLPSIFLAGF). A heme-binding site is contributed by His-24.

The protein belongs to the PsbE/PsbF family. In terms of assembly, heterodimer of an alpha subunit and a beta subunit. PSII is composed of 1 copy each of membrane proteins PsbA, PsbB, PsbC, PsbD, PsbE, PsbF, PsbH, PsbI, PsbJ, PsbK, PsbL, PsbM, PsbT, PsbX, PsbY, PsbZ, Psb30/Ycf12, peripheral proteins PsbO, CyanoQ (PsbQ), PsbU, PsbV and a large number of cofactors. It forms dimeric complexes. Requires heme b as cofactor.

It localises to the cellular thylakoid membrane. Its function is as follows. This b-type cytochrome is tightly associated with the reaction center of photosystem II (PSII). PSII is a light-driven water:plastoquinone oxidoreductase that uses light energy to abstract electrons from H(2)O, generating O(2) and a proton gradient subsequently used for ATP formation. It consists of a core antenna complex that captures photons, and an electron transfer chain that converts photonic excitation into a charge separation. In Synechococcus sp. (strain CC9311), this protein is Cytochrome b559 subunit alpha.